Here is a 163-residue protein sequence, read N- to C-terminus: Nucleotide-binding protein HSM_1099 (163 aa).

The protein belongs to the YajQ family.

Nucleotide-binding protein. The polypeptide is Nucleotide-binding protein HSM_1099 (Histophilus somni (strain 2336) (Haemophilus somnus)).